A 588-amino-acid polypeptide reads, in one-letter code: Protein POF1B (588 aa).

2 coiled-coil regions span residues 332–442 (STFS…VSET) and 502–530 (LHEL…RQEI).

As to quaternary structure, interacts with nonmuscle actin.

It localises to the cell junction. The protein resides in the tight junction. Functionally, plays a key role in the organization of epithelial monolayers by regulating the actin cytoskeleton. May be involved in ovary development. This is Protein POF1B (POF1B) from Pongo abelii (Sumatran orangutan).